An 86-amino-acid polypeptide reads, in one-letter code: Small ribosomal subunit protein bS18 (86 aa).

The protein belongs to the bacterial ribosomal protein bS18 family. As to quaternary structure, part of the 30S ribosomal subunit. Forms a tight heterodimer with protein bS6.

Binds as a heterodimer with protein bS6 to the central domain of the 16S rRNA, where it helps stabilize the platform of the 30S subunit. The polypeptide is Small ribosomal subunit protein bS18 (Campylobacter concisus (strain 13826)).